The following is a 59-amino-acid chain: Cecropin-A1 (59 aa).

An N-terminal signal peptide occupies residues 1-23 (MNFTKLFAIVLLAALVLLGQTEA).

This sequence belongs to the cecropin family.

It localises to the secreted. In terms of biological role, cecropins have lytic and antibacterial activity against several Gram-positive and Gram-negative bacteria. The chain is Cecropin-A1 (CECA1) from Aedes albopictus (Asian tiger mosquito).